The following is a 326-amino-acid chain: Holliday junction branch migration complex subunit RuvB (326 aa).

The interval 1-180 (MKSISCGKEY…FGIPLHLEFY (180 aa)) is large ATPase domain (RuvB-L). ATP is bound by residues Ile19, Arg20, Gly61, Lys64, Thr65, Thr66, 127–129 (EDF), Arg170, Tyr180, and Arg217. Thr65 contributes to the Mg(2+) binding site. The interval 181 to 251 (SFEELVNIIK…VADSVLLKLG (71 aa)) is small ATPAse domain (RuvB-S). A head domain (RuvB-H) region spans residues 254–326 (KMGLNKLDMN…QAKEYLSFQH (73 aa)). DNA contacts are provided by Arg307 and Arg312.

The protein belongs to the RuvB family. Homohexamer. Forms an RuvA(8)-RuvB(12)-Holliday junction (HJ) complex. HJ DNA is sandwiched between 2 RuvA tetramers; dsDNA enters through RuvA and exits via RuvB. An RuvB hexamer assembles on each DNA strand where it exits the tetramer. Each RuvB hexamer is contacted by two RuvA subunits (via domain III) on 2 adjacent RuvB subunits; this complex drives branch migration. In the full resolvosome a probable DNA-RuvA(4)-RuvB(12)-RuvC(2) complex forms which resolves the HJ.

It is found in the cytoplasm. It catalyses the reaction ATP + H2O = ADP + phosphate + H(+). Functionally, the RuvA-RuvB-RuvC complex processes Holliday junction (HJ) DNA during genetic recombination and DNA repair, while the RuvA-RuvB complex plays an important role in the rescue of blocked DNA replication forks via replication fork reversal (RFR). RuvA specifically binds to HJ cruciform DNA, conferring on it an open structure. The RuvB hexamer acts as an ATP-dependent pump, pulling dsDNA into and through the RuvAB complex. RuvB forms 2 homohexamers on either side of HJ DNA bound by 1 or 2 RuvA tetramers; 4 subunits per hexamer contact DNA at a time. Coordinated motions by a converter formed by DNA-disengaged RuvB subunits stimulates ATP hydrolysis and nucleotide exchange. Immobilization of the converter enables RuvB to convert the ATP-contained energy into a lever motion, pulling 2 nucleotides of DNA out of the RuvA tetramer per ATP hydrolyzed, thus driving DNA branch migration. The RuvB motors rotate together with the DNA substrate, which together with the progressing nucleotide cycle form the mechanistic basis for DNA recombination by continuous HJ branch migration. Branch migration allows RuvC to scan DNA until it finds its consensus sequence, where it cleaves and resolves cruciform DNA. The sequence is that of Holliday junction branch migration complex subunit RuvB from Wolbachia pipientis wMel.